A 341-amino-acid polypeptide reads, in one-letter code: AB hydrolase superfamily protein C1039.03 (341 aa).

It belongs to the AB hydrolase superfamily.

The protein localises to the cytoplasm. It localises to the nucleus. This chain is AB hydrolase superfamily protein C1039.03, found in Schizosaccharomyces pombe (strain 972 / ATCC 24843) (Fission yeast).